The sequence spans 296 residues: ATP synthase gamma chain (296 aa).

It belongs to the ATPase gamma chain family. In terms of assembly, F-type ATPases have 2 components, CF(1) - the catalytic core - and CF(0) - the membrane proton channel. CF(1) has five subunits: alpha(3), beta(3), gamma(1), delta(1), epsilon(1). CF(0) has three main subunits: a, b and c.

The protein localises to the cell inner membrane. In terms of biological role, produces ATP from ADP in the presence of a proton gradient across the membrane. The gamma chain is believed to be important in regulating ATPase activity and the flow of protons through the CF(0) complex. This chain is ATP synthase gamma chain, found in Gluconobacter oxydans (strain 621H) (Gluconobacter suboxydans).